A 165-amino-acid chain; its full sequence is UPF0303 protein Rleg2_2653 (165 aa).

Belongs to the UPF0303 family.

The chain is UPF0303 protein Rleg2_2653 from Rhizobium leguminosarum bv. trifolii (strain WSM2304).